A 500-amino-acid polypeptide reads, in one-letter code: MATQVATPLSPSYTSELIIVCHHVLQHSPTPLTPHSLSFTQGFLLGQLSIALLIFFFIKFFIFGEPPSADDRSLHLNSLRRARTLAHQQSIKQLRTRSNSISLSLRHKDSRSIIRKGEETRGGPSIATILAKTYYNVKGHQPESLDWFNVLIAQTIAQLRADARQDDAILGSLTEVLNSGSKPDWIGEIKVNEIALGDEFPIFSNCRVMPAEDGFWYGPGTTGTEEGRLQARMDVDLSDVITIGIETTLNLNWPKPLSAVLPVALAVSIVRFSGTLALSFIPSSSPPSTSTTTPNPEHHRSNSTTSSSTSPPHRPTTLAFTFLDDYRLDLSVRSLVGSRSRLQDVPKIAQLIESRVHAWFDERAVEPRFQQIVLPSLWPRKHNTRGGATEDVEASEADLDEEVILEEEEEEEEDGGYTLPVPPQLRHPSAASTSLEAEGAKLREAEIRAGVRKQERPGMSRAQTSREEGVRYRPKPVSRTSEGWSGQKGMPGALAPGTFR.

The Lumenal portion of the chain corresponds to 1 to 42 (MATQVATPLSPSYTSELIIVCHHVLQHSPTPLTPHSLSFTQG). Residues 43 to 63 (FLLGQLSIALLIFFFIKFFIF) form a helical membrane-spanning segment. Over 64–500 (GEPPSADDRS…PGALAPGTFR (437 aa)) the chain is Cytoplasmic. The region spanning 141 to 375 (QPESLDWFNV…EPRFQQIVLP (235 aa)) is the SMP-LTD domain. Low complexity-rich tracts occupy residues 283–294 (SSSPPSTSTTTP) and 302–316 (NSTT…HRPT). Disordered regions lie at residues 283–316 (SSSP…HRPT) and 406–500 (EEEE…GTFR). Over residues 406–415 (EEEEEEEEDG) the composition is skewed to acidic residues. The span at 438–471 (EGAKLREAEIRAGVRKQERPGMSRAQTSREEGVR) shows a compositional bias: basic and acidic residues.

This sequence belongs to the MMM1 family. Homodimer. Component of the ER-mitochondria encounter structure (ERMES) or MDM complex, composed of MMM1, MDM10, MDM12 and MDM34. An MMM1 homodimer associates with one molecule of MDM12 on each side in a pairwise head-to-tail manner, and the SMP-LTD domains of MMM1 and MDM12 generate a continuous hydrophobic tunnel for phospholipid trafficking.

It is found in the endoplasmic reticulum membrane. Its function is as follows. Component of the ERMES/MDM complex, which serves as a molecular tether to connect the endoplasmic reticulum (ER) and mitochondria. Components of this complex are involved in the control of mitochondrial shape and protein biogenesis, and function in nonvesicular lipid trafficking between the ER and mitochondria. The MDM12-MMM1 subcomplex functions in the major beta-barrel assembly pathway that is responsible for biogenesis of all outer membrane beta-barrel proteins, and acts in a late step after the SAM complex. The MDM10-MDM12-MMM1 subcomplex further acts in the TOM40-specific pathway after the action of the MDM12-MMM1 complex. Essential for establishing and maintaining the structure of mitochondria and maintenance of mtDNA nucleoids. The protein is Maintenance of mitochondrial morphology protein 1 of Phaeosphaeria nodorum (strain SN15 / ATCC MYA-4574 / FGSC 10173) (Glume blotch fungus).